A 260-amino-acid chain; its full sequence is Alpha-acetolactate decarboxylase (260 aa).

This sequence belongs to the alpha-acetolactate decarboxylase family.

It catalyses the reaction (2S)-2-acetolactate + H(+) = (R)-acetoin + CO2. Its pathway is polyol metabolism; (R,R)-butane-2,3-diol biosynthesis; (R,R)-butane-2,3-diol from pyruvate: step 2/3. In terms of biological role, converts acetolactate into acetoin. In Methylococcus capsulatus (strain ATCC 33009 / NCIMB 11132 / Bath), this protein is Alpha-acetolactate decarboxylase (budA).